A 146-amino-acid polypeptide reads, in one-letter code: Hemoglobin subunit beta (146 aa).

N-acetylvaline is present on Val-1. In terms of domain architecture, Globin spans 2-146 (HLTDGEKNAL…VANALAHKYH (145 aa)). Ser-44 carries the phosphoserine modification. At Lys-59 the chain carries N6-acetyllysine. His-63 contacts heme b. Residue Lys-82 is modified to N6-acetyllysine. Residue His-92 participates in heme b binding. Cys-93 is subject to S-nitrosocysteine. An N6-acetyllysine modification is found at Lys-144.

Belongs to the globin family. In terms of assembly, heterotetramer of two alpha chains and two beta chains. As to expression, red blood cells.

Its function is as follows. Involved in oxygen transport from the lung to the various peripheral tissues. This chain is Hemoglobin subunit beta, found in Otospermophilus beecheyi (California ground squirrel).